Here is a 225-residue protein sequence, read N- to C-terminus: Uracil-DNA glycosylase (225 aa).

D65 serves as the catalytic Proton acceptor.

The protein belongs to the uracil-DNA glycosylase (UDG) superfamily. UNG family.

Its subcellular location is the cytoplasm. The enzyme catalyses Hydrolyzes single-stranded DNA or mismatched double-stranded DNA and polynucleotides, releasing free uracil.. In terms of biological role, excises uracil residues from the DNA which can arise as a result of misincorporation of dUMP residues by DNA polymerase or due to deamination of cytosine. The sequence is that of Uracil-DNA glycosylase from Bacillus cereus (strain ZK / E33L).